A 158-amino-acid chain; its full sequence is Immunoglobulin J chain (158 aa).

Residues 1–22 (MKNHLFFWGVLAIFVQAVLVTA) form the signal peptide. Cystine bridges form between Cys36-Cys122, Cys95-Cys115, and Cys130-Cys155. Asn72 carries N-linked (GlcNAc...) (complex) asparagine glycosylation.

As to quaternary structure, part of the secretory IgA (sIgA) complex that consists of two, four or five IgA monomers, and two additional non-Ig polypeptides, namely the JCHAIN and the secretory component (the proteolytic product of PIGR). Part of the secretory IgM (sIgM) complex that consist of five IgM monomers, and two additional non-Ig polypeptides, namely the JCHAIN and the secretory component (the proteolytic product of PIGR). JCHAIN-containing IgM interacts (via CH4 domain) with FCRM (via Ig-like domain). In terms of processing, N-glycosylated. N-glycans attached to Asn-72 varies from truncated, differentially fucosylated to sialylated (NeuGc) complex types: Man3GlcNAc2; GlcNAc2Man3GlcNAc2(Fuc); Gal1GlcNAc1Man3GlcNAc2; GlcNAc2Man3GlcNAc2; GlcNAc1Man3GlcNAc2; GlcNAc1Man2GlcNAc2 and NeuGc1Gal1GlcNAc2Man3GlcNAc2.

The protein resides in the secreted. Functionally, serves to link two monomer units of either IgM or IgA. In the case of IgM, the J chain-joined dimer is a nucleating unit for the IgM pentamer, and in the case of IgA it induces dimers and/or larger polymers. It also helps to bind these immunoglobulins to secretory component. The sequence is that of Immunoglobulin J chain (JCHAIN) from Equus asinus (Donkey).